The chain runs to 150 residues: uncharacterized protein (150 aa).

The HTH asnC-type domain occupies Leu-5–Gly-66. A DNA-binding region (H-T-H motif) is located at residues Ile-24–Lys-43.

This is an uncharacterized protein from Pyrococcus furiosus (strain ATCC 43587 / DSM 3638 / JCM 8422 / Vc1).